Reading from the N-terminus, the 565-residue chain is Proline--tRNA ligase (565 aa).

The protein belongs to the class-II aminoacyl-tRNA synthetase family. ProS type 1 subfamily. Homodimer.

The protein resides in the cytoplasm. It catalyses the reaction tRNA(Pro) + L-proline + ATP = L-prolyl-tRNA(Pro) + AMP + diphosphate. In terms of biological role, catalyzes the attachment of proline to tRNA(Pro) in a two-step reaction: proline is first activated by ATP to form Pro-AMP and then transferred to the acceptor end of tRNA(Pro). As ProRS can inadvertently accommodate and process non-cognate amino acids such as alanine and cysteine, to avoid such errors it has two additional distinct editing activities against alanine. One activity is designated as 'pretransfer' editing and involves the tRNA(Pro)-independent hydrolysis of activated Ala-AMP. The other activity is designated 'posttransfer' editing and involves deacylation of mischarged Ala-tRNA(Pro). The misacylated Cys-tRNA(Pro) is not edited by ProRS. The protein is Proline--tRNA ligase of Lactobacillus gasseri (strain ATCC 33323 / DSM 20243 / BCRC 14619 / CIP 102991 / JCM 1131 / KCTC 3163 / NCIMB 11718 / NCTC 13722 / AM63).